We begin with the raw amino-acid sequence, 369 residues long: ATP-dependent 6-phosphofructokinase (369 aa).

ATP-binding positions include G15, 81–82 (KG), and 108–111 (GDGS). Mg(2+) is bound at residue D109. Substrate-binding positions include 132–134 (TID), R169, 176–178 (MGR), E230, R266, and 272–275 (HIQR). D134 (proton acceptor) is an active-site residue.

The protein belongs to the phosphofructokinase type A (PFKA) family. Mixed-substrate PFK group III subfamily. As to quaternary structure, homodimer or homotetramer. Requires Mg(2+) as cofactor.

The protein resides in the cytoplasm. The enzyme catalyses beta-D-fructose 6-phosphate + ATP = beta-D-fructose 1,6-bisphosphate + ADP + H(+). It participates in carbohydrate degradation; glycolysis; D-glyceraldehyde 3-phosphate and glycerone phosphate from D-glucose: step 3/4. Catalyzes the phosphorylation of D-fructose 6-phosphate to fructose 1,6-bisphosphate by ATP, the first committing step of glycolysis. This chain is ATP-dependent 6-phosphofructokinase, found in Thermosynechococcus vestitus (strain NIES-2133 / IAM M-273 / BP-1).